A 607-amino-acid polypeptide reads, in one-letter code: Elongation factor 4 (607 aa).

The tr-type G domain occupies 11–193; sequence EKIRNFSIIA…QIVEKVPAPQ (183 aa). GTP-binding positions include 23–28 and 140–143; these read DHGKST and NKID.

It belongs to the TRAFAC class translation factor GTPase superfamily. Classic translation factor GTPase family. LepA subfamily.

The protein localises to the cell membrane. It carries out the reaction GTP + H2O = GDP + phosphate + H(+). Required for accurate and efficient protein synthesis under certain stress conditions. May act as a fidelity factor of the translation reaction, by catalyzing a one-codon backward translocation of tRNAs on improperly translocated ribosomes. Back-translocation proceeds from a post-translocation (POST) complex to a pre-translocation (PRE) complex, thus giving elongation factor G a second chance to translocate the tRNAs correctly. Binds to ribosomes in a GTP-dependent manner. The sequence is that of Elongation factor 4 from Lactococcus lactis subsp. cremoris (strain SK11).